The chain runs to 150 residues: 3-hydroxyacyl-[acyl-carrier-protein] dehydratase FabZ (150 aa).

Histidine 54 is a catalytic residue.

It belongs to the thioester dehydratase family. FabZ subfamily.

It is found in the cytoplasm. The catalysed reaction is a (3R)-hydroxyacyl-[ACP] = a (2E)-enoyl-[ACP] + H2O. In terms of biological role, involved in unsaturated fatty acids biosynthesis. Catalyzes the dehydration of short chain beta-hydroxyacyl-ACPs and long chain saturated and unsaturated beta-hydroxyacyl-ACPs. This is 3-hydroxyacyl-[acyl-carrier-protein] dehydratase FabZ from Chromobacterium violaceum (strain ATCC 12472 / DSM 30191 / JCM 1249 / CCUG 213 / NBRC 12614 / NCIMB 9131 / NCTC 9757 / MK).